The chain runs to 234 residues: Ubiquinone biosynthesis O-methyltransferase (234 aa).

Residues R39, G59, D80, and M124 each coordinate S-adenosyl-L-methionine.

Belongs to the methyltransferase superfamily. UbiG/COQ3 family.

It carries out the reaction a 3-demethylubiquinol + S-adenosyl-L-methionine = a ubiquinol + S-adenosyl-L-homocysteine + H(+). It catalyses the reaction a 3-(all-trans-polyprenyl)benzene-1,2-diol + S-adenosyl-L-methionine = a 2-methoxy-6-(all-trans-polyprenyl)phenol + S-adenosyl-L-homocysteine + H(+). It functions in the pathway cofactor biosynthesis; ubiquinone biosynthesis. In terms of biological role, O-methyltransferase that catalyzes the 2 O-methylation steps in the ubiquinone biosynthetic pathway. In Aliivibrio fischeri (strain ATCC 700601 / ES114) (Vibrio fischeri), this protein is Ubiquinone biosynthesis O-methyltransferase.